A 368-amino-acid polypeptide reads, in one-letter code: Probable dual-specificity RNA methyltransferase RlmN (368 aa).

Residue Glu109 is the Proton acceptor of the active site. Residues Tyr115–Glu355 form the Radical SAM core domain. Cysteines 122 and 360 form a disulfide. Residues Cys129, Cys133, and Cys136 each coordinate [4Fe-4S] cluster. S-adenosyl-L-methionine contacts are provided by residues Gly184–Glu185, Ser218, Ser241–His243, and Asn317. The S-methylcysteine intermediate role is filled by Cys360.

Belongs to the radical SAM superfamily. RlmN family. It depends on [4Fe-4S] cluster as a cofactor.

It is found in the cytoplasm. The enzyme catalyses adenosine(2503) in 23S rRNA + 2 reduced [2Fe-2S]-[ferredoxin] + 2 S-adenosyl-L-methionine = 2-methyladenosine(2503) in 23S rRNA + 5'-deoxyadenosine + L-methionine + 2 oxidized [2Fe-2S]-[ferredoxin] + S-adenosyl-L-homocysteine. The catalysed reaction is adenosine(37) in tRNA + 2 reduced [2Fe-2S]-[ferredoxin] + 2 S-adenosyl-L-methionine = 2-methyladenosine(37) in tRNA + 5'-deoxyadenosine + L-methionine + 2 oxidized [2Fe-2S]-[ferredoxin] + S-adenosyl-L-homocysteine. In terms of biological role, specifically methylates position 2 of adenine 2503 in 23S rRNA and position 2 of adenine 37 in tRNAs. This chain is Probable dual-specificity RNA methyltransferase RlmN, found in Streptomyces griseus subsp. griseus (strain JCM 4626 / CBS 651.72 / NBRC 13350 / KCC S-0626 / ISP 5235).